The primary structure comprises 610 residues: Calcium-dependent protein kinase 1 (610 aa).

The N-myristoyl glycine moiety is linked to residue glycine 2. Cysteine 5 carries S-palmitoyl cysteine lipidation. The interval 17–133 (VSAAMWRPRD…HMKRVSSAGL (117 aa)) is disordered. 2 stretches are compositionally biased toward basic and acidic residues: residues 47 to 56 (LRSRLSDEVQ) and 70 to 117 (TDVE…DPPA). Over residues 118-127 (KPKKPKHMKR) the composition is skewed to basic residues. The Protein kinase domain maps to 150 to 408 (YSLGRKLGQG…AHQVLCHPWV (259 aa)). ATP-binding positions include 156–164 (LGQGQFGTT) and lysine 179. Catalysis depends on aspartate 274, which acts as the Proton acceptor. Serine 314 carries the post-translational modification Phosphoserine. An autoinhibitory domain region spans residues 414 to 444 (APDKPLDSAVLSRMKQFSAMNKFKKMALRVI). 4 consecutive EF-hand domains span residues 451 to 486 (EEIA…VGAN), 487 to 522 (LKES…LNKI), 523 to 558 (ERED…FGVE), and 559 to 592 (DVRI…GSIT). Ca(2+) contacts are provided by aspartate 464, aspartate 466, serine 468, glutamine 470, glutamate 475, aspartate 500, aspartate 502, serine 504, threonine 506, glutamate 511, aspartate 536, aspartate 538, serine 540, tyrosine 542, glutamate 547, aspartate 570, aspartate 572, aspartate 574, arginine 576, and glutamate 581.

It belongs to the protein kinase superfamily. Ser/Thr protein kinase family. CDPK subfamily. As to quaternary structure, interacts with 14-3-3 proteins.

The protein localises to the peroxisome membrane. The catalysed reaction is L-seryl-[protein] + ATP = O-phospho-L-seryl-[protein] + ADP + H(+). It carries out the reaction L-threonyl-[protein] + ATP = O-phospho-L-threonyl-[protein] + ADP + H(+). With respect to regulation, activated by calcium. Autophosphorylation may play an important role in the regulation of the kinase activity. Functionally, may play a role in signal transduction pathways that involve calcium as a second messenger. Phosphorylates the Ca(2+)-ATPase ACA2 resulting in the inhibition of its calcium activation. The polypeptide is Calcium-dependent protein kinase 1 (CPK1) (Arabidopsis thaliana (Mouse-ear cress)).